A 212-amino-acid polypeptide reads, in one-letter code: Putative DNA-binding protein At1g48610 (212 aa).

Residues 1–130 are disordered; that stretch reads MAKTALTPPA…GRPKKDDVAA (130 aa). Residues 27 to 44 show a composition bias toward polar residues; the sequence is NKPQTDATGVSATDTASQ. 3 consecutive DNA-binding regions (a.T hook) follow at residues 45-56, 70-79, and 94-98; these read KRGRGRPPKAKS, TKPSGRPKRN, and KKRGR. Residues 57–72 show a composition bias toward polar residues; it reads DSSQIGAVSAKASTKP. The segment covering 103–113 has biased composition (low complexity); that stretch reads TVTAAVVTTAT. Residues 118–127 constitute a DNA-binding region (a.T hook 4); that stretch reads RKRGRPKKDD. Residues 176–210 are a coiled coil; that stretch reads DLKKRTALLQKKVKEAAAKLKQAVTAIDEVQKLAD.

The protein resides in the nucleus. Its function is as follows. May bind DNA. The sequence is that of Putative DNA-binding protein At1g48610 from Arabidopsis thaliana (Mouse-ear cress).